The sequence spans 340 residues: Biotin synthase (340 aa).

The Radical SAM core domain maps to 47–269 (SELQLSQLLS…VAVARIVCPK (223 aa)). Positions 62, 66, and 69 each coordinate [4Fe-4S] cluster. Positions 106, 137, 197, and 273 each coordinate [2Fe-2S] cluster.

Belongs to the radical SAM superfamily. Biotin synthase family. In terms of assembly, homodimer. Requires [4Fe-4S] cluster as cofactor. It depends on [2Fe-2S] cluster as a cofactor.

The enzyme catalyses (4R,5S)-dethiobiotin + (sulfur carrier)-SH + 2 reduced [2Fe-2S]-[ferredoxin] + 2 S-adenosyl-L-methionine = (sulfur carrier)-H + biotin + 2 5'-deoxyadenosine + 2 L-methionine + 2 oxidized [2Fe-2S]-[ferredoxin]. It participates in cofactor biosynthesis; biotin biosynthesis; biotin from 7,8-diaminononanoate: step 2/2. Functionally, catalyzes the conversion of dethiobiotin (DTB) to biotin by the insertion of a sulfur atom into dethiobiotin via a radical-based mechanism. In Caulobacter sp. (strain K31), this protein is Biotin synthase.